Consider the following 352-residue polypeptide: Holliday junction branch migration complex subunit RuvB (352 aa).

A large ATPase domain (RuvB-L) region spans residues 4–185 (PDRLISAVSG…FGIVQRLEFY (182 aa)). Residues Ile-24, Arg-25, Gly-66, Lys-69, Thr-70, Thr-71, 132 to 134 (EDF), Arg-175, Tyr-185, and Arg-222 each bind ATP. A Mg(2+)-binding site is contributed by Thr-70. The interval 186–256 (NVEDLATIVS…IADKALNLLD (71 aa)) is small ATPAse domain (RuvB-S). The tract at residues 259 to 352 (ERGFDHLDRR…TDLFTSEDGN (94 aa)) is head domain (RuvB-H). 3 residues coordinate DNA: Arg-295, Arg-314, and Arg-319.

The protein belongs to the RuvB family. As to quaternary structure, homohexamer. Forms an RuvA(8)-RuvB(12)-Holliday junction (HJ) complex. HJ DNA is sandwiched between 2 RuvA tetramers; dsDNA enters through RuvA and exits via RuvB. An RuvB hexamer assembles on each DNA strand where it exits the tetramer. Each RuvB hexamer is contacted by two RuvA subunits (via domain III) on 2 adjacent RuvB subunits; this complex drives branch migration. In the full resolvosome a probable DNA-RuvA(4)-RuvB(12)-RuvC(2) complex forms which resolves the HJ.

The protein resides in the cytoplasm. It carries out the reaction ATP + H2O = ADP + phosphate + H(+). Its function is as follows. The RuvA-RuvB-RuvC complex processes Holliday junction (HJ) DNA during genetic recombination and DNA repair, while the RuvA-RuvB complex plays an important role in the rescue of blocked DNA replication forks via replication fork reversal (RFR). RuvA specifically binds to HJ cruciform DNA, conferring on it an open structure. The RuvB hexamer acts as an ATP-dependent pump, pulling dsDNA into and through the RuvAB complex. RuvB forms 2 homohexamers on either side of HJ DNA bound by 1 or 2 RuvA tetramers; 4 subunits per hexamer contact DNA at a time. Coordinated motions by a converter formed by DNA-disengaged RuvB subunits stimulates ATP hydrolysis and nucleotide exchange. Immobilization of the converter enables RuvB to convert the ATP-contained energy into a lever motion, pulling 2 nucleotides of DNA out of the RuvA tetramer per ATP hydrolyzed, thus driving DNA branch migration. The RuvB motors rotate together with the DNA substrate, which together with the progressing nucleotide cycle form the mechanistic basis for DNA recombination by continuous HJ branch migration. Branch migration allows RuvC to scan DNA until it finds its consensus sequence, where it cleaves and resolves cruciform DNA. This is Holliday junction branch migration complex subunit RuvB from Pseudomonas aeruginosa (strain LESB58).